The primary structure comprises 386 residues: Patatin group M-2 (386 aa).

The first 23 residues, 1 to 23 (MATTKSFLILFFMILATTSSTCA), serve as a signal peptide directing secretion. The region spanning 32-229 (LSIDGGGIKG…TVGDPALLSL (198 aa)) is the PNPLA domain. Residues 36 to 41 (GGGIKG) carry the GXGXXG motif. Positions 75–79 (GTSTG) match the GXSXG motif. The active-site Nucleophile is serine 77. An N-linked (GlcNAc...) asparagine glycan is attached at asparagine 115. Catalysis depends on aspartate 215, which acts as the Proton acceptor. A DGA/G motif is present at residues 215–217 (DGG). A coiled-coil region spans residues 321–384 (ENALTGTTTE…DRKKLRANKA (64 aa)).

Belongs to the patatin family. As to expression, tuber.

Its subcellular location is the vacuole. In terms of biological role, probable lipolytic acyl hydrolase (LAH), an activity which is thought to be involved in the response of tubers to pathogens. The protein is Patatin group M-2 of Solanum tuberosum (Potato).